Reading from the N-terminus, the 350-residue chain is tRNA uridine(34) hydroxylase (350 aa).

A Rhodanese domain is found at 146 to 240 (DDPDALFIDM…YARKAREQGL (95 aa)). Cysteine 200 serves as the catalytic Cysteine persulfide intermediate.

It belongs to the TrhO family.

It carries out the reaction uridine(34) in tRNA + AH2 + O2 = 5-hydroxyuridine(34) in tRNA + A + H2O. Functionally, catalyzes oxygen-dependent 5-hydroxyuridine (ho5U) modification at position 34 in tRNAs. The protein is tRNA uridine(34) hydroxylase of Escherichia fergusonii (strain ATCC 35469 / DSM 13698 / CCUG 18766 / IAM 14443 / JCM 21226 / LMG 7866 / NBRC 102419 / NCTC 12128 / CDC 0568-73).